The following is a 231-amino-acid chain: Ribose-5-phosphate isomerase A (231 aa).

Substrate is bound by residues 32–35 (TGST), 85–88 (DGAD), and 98–101 (KGGG). The Proton acceptor role is filled by Glu107. Lys125 is a substrate binding site.

It belongs to the ribose 5-phosphate isomerase family. In terms of assembly, homodimer.

The enzyme catalyses aldehydo-D-ribose 5-phosphate = D-ribulose 5-phosphate. It participates in carbohydrate degradation; pentose phosphate pathway; D-ribose 5-phosphate from D-ribulose 5-phosphate (non-oxidative stage): step 1/1. Its function is as follows. Catalyzes the reversible conversion of ribose-5-phosphate to ribulose 5-phosphate. This chain is Ribose-5-phosphate isomerase A, found in Burkholderia orbicola (strain MC0-3).